The chain runs to 155 residues: Ribonuclease H (155 aa).

In terms of domain architecture, RNase H type-1 spans 4 to 146 (NIDVVEIYTD…CDRLATEQIK (143 aa)). Mg(2+) contacts are provided by D13, E51, D73, and D138.

This sequence belongs to the RNase H family. As to quaternary structure, monomer. Mg(2+) is required as a cofactor.

It is found in the cytoplasm. The enzyme catalyses Endonucleolytic cleavage to 5'-phosphomonoester.. Functionally, endonuclease that specifically degrades the RNA of RNA-DNA hybrids. The chain is Ribonuclease H from Thermoanaerobacter pseudethanolicus (strain ATCC 33223 / 39E) (Clostridium thermohydrosulfuricum).